A 419-amino-acid polypeptide reads, in one-letter code: Pyrophosphate--fructose 6-phosphate 1-phosphotransferase (419 aa).

Gly12 contacts diphosphate. Asp107 is a Mg(2+) binding site. Residues Thr132–Asp134, Met178–Arg180, Glu238, and Tyr300–Arg303 each bind substrate. Catalysis depends on Asp134, which acts as the Proton acceptor.

It belongs to the phosphofructokinase type A (PFKA) family. PPi-dependent PFK group II subfamily. Clade 'Short' sub-subfamily. As to quaternary structure, homodimer. The cofactor is Mg(2+). Requires Co(2+) as cofactor. Mn(2+) is required as a cofactor. It depends on Ni(2+) as a cofactor.

It is found in the cytoplasm. The enzyme catalyses beta-D-fructose 6-phosphate + diphosphate = beta-D-fructose 1,6-bisphosphate + phosphate + H(+). It functions in the pathway carbohydrate degradation; glycolysis; D-glyceraldehyde 3-phosphate and glycerone phosphate from D-glucose: step 3/4. With respect to regulation, non-allosteric. Functionally, catalyzes the phosphorylation of D-fructose 6-phosphate, the first committing step of glycolysis. Uses inorganic phosphate (PPi) as phosphoryl donor instead of ATP like common ATP-dependent phosphofructokinases (ATP-PFKs), which renders the reaction reversible, and can thus function both in glycolysis and gluconeogenesis. Consistently, PPi-PFK can replace the enzymes of both the forward (ATP-PFK) and reverse (fructose-bisphosphatase (FBPase)) reactions. In Thermotoga maritima (strain ATCC 43589 / DSM 3109 / JCM 10099 / NBRC 100826 / MSB8), this protein is Pyrophosphate--fructose 6-phosphate 1-phosphotransferase.